We begin with the raw amino-acid sequence, 198 residues long: MRWPVPPLGYLLLGGQGLLLTFSLISSQNNTSPVTYPDINVSAAPEPRDPLGPLVLCSYLPEEFVECDDPVDHMGNGTAQQELRYGCKKFGGQAYGDVEHTQVMCRALDGIECDGSRSFLRGNRPCIKYTGHYFITTLLYSFFLGCFGVDRFCLGHTGTAVGKLLTWGGLGIWWFVDLILLITGGLMPSDNSNWCTIY.

The signal sequence occupies residues 1–27 (MRWPVPPLGYLLLGGQGLLLTFSLISS). Residues 28 to 128 (QNNTSPVTYP…FLRGNRPCIK (101 aa)) are Extracellular-facing. Residues Asn-29, Asn-40, and Asn-76 are each glycosylated (N-linked (GlcNAc...) asparagine). The chain crosses the membrane as a helical span at residues 129–149 (YTGHYFITTLLYSFFLGCFGV). Positions 131 to 179 (GHYFITTLLYSFFLGCFGVDRFCLGHTGTAVGKLLTWGGLGIWWFVDLI) constitute a TM2 domain. The Cytoplasmic segment spans residues 150–166 (DRFCLGHTGTAVGKLLT). A helical membrane pass occupies residues 167–187 (WGGLGIWWFVDLILLITGGLM). Residues 188 to 198 (PSDNSNWCTIY) are Extracellular-facing.

The protein belongs to the TM2 family.

Its subcellular location is the membrane. The polypeptide is TM2 domain-containing protein 2 (tm2d2) (Xenopus laevis (African clawed frog)).